The sequence spans 804 residues: Phenylalanine--tRNA ligase beta subunit (804 aa).

The tRNA-binding domain occupies 39–147; sequence GEGLDSVVTA…PDCEPGQPVF (109 aa). The B5 domain occupies 401–480; sequence LAERKVTLAV…RLNGYDNIPV (80 aa). The Mg(2+) site is built by D458, D464, E467, and E468. Positions 711–804 constitute an FDX-ACB domain; the sequence is SRFPQVARDS…LIAKLGAEIR (94 aa).

The protein belongs to the phenylalanyl-tRNA synthetase beta subunit family. Type 1 subfamily. As to quaternary structure, tetramer of two alpha and two beta subunits. Mg(2+) is required as a cofactor.

It is found in the cytoplasm. The enzyme catalyses tRNA(Phe) + L-phenylalanine + ATP = L-phenylalanyl-tRNA(Phe) + AMP + diphosphate + H(+). This Syntrophotalea carbinolica (strain DSM 2380 / NBRC 103641 / GraBd1) (Pelobacter carbinolicus) protein is Phenylalanine--tRNA ligase beta subunit.